Consider the following 253-residue polypeptide: uncharacterized protein (253 aa).

2 EamA domains span residues 1 to 97 and 116 to 237; these read MFFM…IYSL and FFWA…ISRL. 8 helical membrane passes run 2–22, 28–48, 53–73, 80–100, 101–121, 138–158, 162–182, and 214–234; these read FFMA…AKQL, IFLL…GLLY, ESAV…TLIL, TEVI…LNLG, IYFS…WALF, AVQL…QFYF, INFL…SFYL, and GVNV…GILI.

The protein belongs to the EamA transporter family.

The protein resides in the cell membrane. This is an uncharacterized protein from Acidianus ambivalens (Desulfurolobus ambivalens).